The chain runs to 1211 residues: Sterol 3-beta-glucosyltransferase (1211 aa).

Residues 1-10 are compositionally biased toward basic and acidic residues; sequence MSQLRPRDSS. A disordered region spans residues 1-61; it reads MSQLRPRDSS…DETEAEDDID (61 aa). Residues 196 to 235 form the GRAM 1 domain; that stretch reads EKLKTTFDLSDDDEFVNDYPCWLLHEVFLQGHIYITSRYL. Residues 248–347 form the PH domain; it reads VTMSGALSIR…WVTDLRKHIF (100 aa). 2 disordered regions span residues 422–452 and 500–531; these read LTDS…KLSR and VVPN…PSNW. A compositionally biased stretch (acidic residues) spans 423-432; sequence TDSDSSESDS. Positions 507-525 are enriched in basic and acidic residues; sequence SELKQDHAGDAPKDSEEPS. The region spanning 586–652 is the GRAM 2 domain; the sequence is SRFRKHFSLP…SDIENVYNLK (67 aa). Positions 770, 771, 773, 1046, 1072, 1073, 1075, 1088, 1091, 1092, 1093, 1112, and 1113 each coordinate UDP-alpha-D-glucose.

This sequence belongs to the glycosyltransferase 28 family.

Its subcellular location is the cytoplasm. It is found in the preautophagosomal structure membrane. It carries out the reaction a sterol + UDP-alpha-D-glucose = a sterol 3-beta-D-glucoside + UDP + H(+). The enzyme catalyses ergosterol + UDP-alpha-D-glucose = ergosteryl 3-beta-D-glucoside + UDP + H(+). Its function is as follows. Sterol glycosyltransferase responsible for the glycosylation of ergosterol to form ergosterol-glucoside. Shows also activity in vitro on other sterols such as cholesterol, beta-sitosterol, stigmasterol and tomatidine. Probable sterol 3-beta-glucosyltransferase that mediates autophagic degradation of peroxisomes (pexophagy). The protein is Sterol 3-beta-glucosyltransferase of Komagataella phaffii (strain GS115 / ATCC 20864) (Yeast).